A 450-amino-acid chain; its full sequence is Glucose-6-phosphate isomerase (450 aa).

The active-site Proton donor is the E290. Catalysis depends on residues H311 and K425.

Belongs to the GPI family.

It localises to the cytoplasm. It carries out the reaction alpha-D-glucose 6-phosphate = beta-D-fructose 6-phosphate. The protein operates within carbohydrate biosynthesis; gluconeogenesis. Its pathway is carbohydrate degradation; glycolysis; D-glyceraldehyde 3-phosphate and glycerone phosphate from D-glucose: step 2/4. Catalyzes the reversible isomerization of glucose-6-phosphate to fructose-6-phosphate. In Listeria monocytogenes serovar 1/2a (strain ATCC BAA-679 / EGD-e), this protein is Glucose-6-phosphate isomerase.